The primary structure comprises 173 residues: Small ribosomal subunit protein uS5 (173 aa).

An S5 DRBM domain is found at L18–V81.

This sequence belongs to the universal ribosomal protein uS5 family. As to quaternary structure, part of the 30S ribosomal subunit. Contacts proteins S4 and S8.

Its function is as follows. With S4 and S12 plays an important role in translational accuracy. Functionally, located at the back of the 30S subunit body where it stabilizes the conformation of the head with respect to the body. The protein is Small ribosomal subunit protein uS5 of Bordetella petrii (strain ATCC BAA-461 / DSM 12804 / CCUG 43448).